The primary structure comprises 497 residues: TBC1 domain family member 22A (497 aa).

The disordered stretch occupies residues 83–147 (RNHSQRQGRP…DAAPLQRSQS (65 aa)). 3 positions are modified to phosphoserine: serine 112, serine 125, and serine 147. One can recognise a Rab-GAP TBC domain in the interval 202 to 426 (GIPKPVRPMT…RLWDTYQSEP (225 aa)).

Homodimer. Interacts with ACBD3 and ARFGEF1. Interacts with YWHAB, YWHAE, YWHAG, YWHAH, YWHAQ and YWHAZ.

In terms of biological role, may act as a GTPase-activating protein for Rab family protein(s). The sequence is that of TBC1 domain family member 22A (TBC1D22A) from Macaca fascicularis (Crab-eating macaque).